Reading from the N-terminus, the 326-residue chain is Peroxidase 41 (326 aa).

The N-terminal stretch at 1–20 (MSSVINVLFVVLVFVPSIYS) is a signal peptide. N25 is a glycosylation site (N-linked (GlcNAc...) asparagine). 4 cysteine pairs are disulfide-bonded: C35/C116, C68/C73, C122/C318, and C201/C228. The active-site Proton acceptor is H66. The Ca(2+) site is built by D67, G72, D74, and S76. Residue P164 coordinates substrate. N167 carries N-linked (GlcNAc...) asparagine glycosylation. Position 194 (H194) interacts with heme b. T195 serves as a coordination point for Ca(2+). N234 is a glycosylation site (N-linked (GlcNAc...) asparagine). D242, T245, and D250 together coordinate Ca(2+). N286 carries an N-linked (GlcNAc...) asparagine glycan.

It belongs to the peroxidase family. Classical plant (class III) peroxidase subfamily. Requires heme b as cofactor. Ca(2+) is required as a cofactor.

The protein localises to the secreted. It catalyses the reaction 2 a phenolic donor + H2O2 = 2 a phenolic radical donor + 2 H2O. Functionally, removal of H(2)O(2), oxidation of toxic reductants, biosynthesis and degradation of lignin, suberization, auxin catabolism, response to environmental stresses such as wounding, pathogen attack and oxidative stress. These functions might be dependent on each isozyme/isoform in each plant tissue. This chain is Peroxidase 41 (PER41), found in Arabidopsis thaliana (Mouse-ear cress).